A 344-amino-acid chain; its full sequence is Protein L-Myc-1-A (344 aa).

Disordered stretches follow at residues 100–162 and 209–261; these read RLTT…DDEI and PPEP…EDIV. Composition is skewed to polar residues over residues 102–112, 123–133, and 236–255; these read TTASPRATNPQ, PGVNSIEQNAN, and PALQQCSSPMPGSPLASGSS. Residues 261–313 form the bHLH domain; that stretch reads VKKKNHNYLERKRRNDLRSRFLALREEVPSLTRSTKTPKVVVLSKATEFLKGL. Residues 313 to 341 are leucine-zipper; the sequence is LVIQEQQLTAEKFKLWSRHQQLLRRISHL.

In terms of assembly, efficient DNA binding requires dimerization with another bHLH protein. Binds DNA as a heterodimer with MAX. High levels in oocytes, modest levels in kidney and low levels in spleen.

It is found in the nucleus. The polypeptide is Protein L-Myc-1-A (mycl1-a) (Xenopus laevis (African clawed frog)).